The following is a 295-amino-acid chain: Protease HtpX homolog (295 aa).

A run of 2 helical transmembrane segments spans residues 6–26 (IGLF…VTSV) and 40–60 (LSSL…VSLL). His148 serves as a coordination point for Zn(2+). Glu149 is a catalytic residue. Position 152 (His152) interacts with Zn(2+). Transmembrane regions (helical) follow at residues 163–183 (LIQG…SYAL) and 198–218 (IANI…VAYF). Glu223 provides a ligand contact to Zn(2+).

This sequence belongs to the peptidase M48B family. Zn(2+) serves as cofactor.

The protein localises to the cell inner membrane. In Leptospira interrogans serogroup Icterohaemorrhagiae serovar copenhageni (strain Fiocruz L1-130), this protein is Protease HtpX homolog.